The following is a 390-amino-acid chain: Queuine tRNA-ribosyltransferase (390 aa).

Asp-92 serves as the catalytic Proton acceptor. Substrate contacts are provided by residues 92–96 (DSGGF), Asp-146, Gln-195, and Gly-222. Residues 253-259 (GVGTPED) form an RNA binding region. Residue Asp-272 is the Nucleophile of the active site. Residues 277–281 (TRNAR) are RNA binding; important for wobble base 34 recognition. 4 residues coordinate Zn(2+): Cys-310, Cys-312, Cys-315, and His-354.

Belongs to the queuine tRNA-ribosyltransferase family. As to quaternary structure, homodimer. Within each dimer, one monomer is responsible for RNA recognition and catalysis, while the other monomer binds to the replacement base PreQ1. Zn(2+) is required as a cofactor.

It carries out the reaction 7-aminomethyl-7-carbaguanine + guanosine(34) in tRNA = 7-aminomethyl-7-carbaguanosine(34) in tRNA + guanine. It participates in tRNA modification; tRNA-queuosine biosynthesis. In terms of biological role, catalyzes the base-exchange of a guanine (G) residue with the queuine precursor 7-aminomethyl-7-deazaguanine (PreQ1) at position 34 (anticodon wobble position) in tRNAs with GU(N) anticodons (tRNA-Asp, -Asn, -His and -Tyr). Catalysis occurs through a double-displacement mechanism. The nucleophile active site attacks the C1' of nucleotide 34 to detach the guanine base from the RNA, forming a covalent enzyme-RNA intermediate. The proton acceptor active site deprotonates the incoming PreQ1, allowing a nucleophilic attack on the C1' of the ribose to form the product. After dissociation, two additional enzymatic reactions on the tRNA convert PreQ1 to queuine (Q), resulting in the hypermodified nucleoside queuosine (7-(((4,5-cis-dihydroxy-2-cyclopenten-1-yl)amino)methyl)-7-deazaguanosine). This chain is Queuine tRNA-ribosyltransferase, found in Delftia acidovorans (strain DSM 14801 / SPH-1).